A 60-amino-acid chain; its full sequence is Cytotoxin 4 (60 aa).

Disulfide bonds link Cys3/Cys21, Cys14/Cys38, Cys42/Cys53, and Cys54/Cys59.

The protein belongs to the three-finger toxin family. Short-chain subfamily. Type IA cytotoxin sub-subfamily. As to quaternary structure, monomer in solution; Homodimer and oligomer in the presence of negatively charged lipids forming a pore with a size ranging between 20 and 30 Angstroms. As to expression, expressed by the venom gland.

Its subcellular location is the secreted. It localises to the target cell membrane. Shows cytolytic activity on many different cells by forming pore in lipid membranes. In vivo, increases heart rate or kills the animal by cardiac arrest. In addition, it binds to heparin with high affinity, interacts with Kv channel-interacting protein 1 (KCNIP1) in a calcium-independent manner, and binds to integrin alpha-V/beta-3 (ITGAV/ITGB3) with moderate affinity. This Naja annulifera (Banded Egyptian cobra) protein is Cytotoxin 4.